A 364-amino-acid polypeptide reads, in one-letter code: tRNA 2-selenouridine synthase (364 aa).

The 124-residue stretch at 14-137 folds into the Rhodanese domain; sequence LIADTPIIDV…LRQTAIQATI (124 aa). Cys-97 serves as the catalytic S-selanylcysteine intermediate.

Belongs to the SelU family. As to quaternary structure, monomer.

The enzyme catalyses 5-methylaminomethyl-2-thiouridine(34) in tRNA + selenophosphate + (2E)-geranyl diphosphate + H2O + H(+) = 5-methylaminomethyl-2-selenouridine(34) in tRNA + (2E)-thiogeraniol + phosphate + diphosphate. The catalysed reaction is 5-methylaminomethyl-2-thiouridine(34) in tRNA + (2E)-geranyl diphosphate = 5-methylaminomethyl-S-(2E)-geranyl-thiouridine(34) in tRNA + diphosphate. It carries out the reaction 5-methylaminomethyl-S-(2E)-geranyl-thiouridine(34) in tRNA + selenophosphate + H(+) = 5-methylaminomethyl-2-(Se-phospho)selenouridine(34) in tRNA + (2E)-thiogeraniol. It catalyses the reaction 5-methylaminomethyl-2-(Se-phospho)selenouridine(34) in tRNA + H2O = 5-methylaminomethyl-2-selenouridine(34) in tRNA + phosphate. Involved in the post-transcriptional modification of the uridine at the wobble position (U34) of tRNA(Lys), tRNA(Glu) and tRNA(Gln). Catalyzes the conversion of 2-thiouridine (S2U-RNA) to 2-selenouridine (Se2U-RNA). Acts in a two-step process involving geranylation of 2-thiouridine (S2U) to S-geranyl-2-thiouridine (geS2U) and subsequent selenation of the latter derivative to 2-selenouridine (Se2U) in the tRNA chain. This chain is tRNA 2-selenouridine synthase, found in Escherichia coli (strain ATCC 8739 / DSM 1576 / NBRC 3972 / NCIMB 8545 / WDCM 00012 / Crooks).